A 331-amino-acid chain; its full sequence is Mitochondrial respiration co-chaperone MRJ1 (331 aa).

A mitochondrion-targeting transit peptide spans 1-36; it reads MLSFQATVRPLAVSSRLHSPAAHIWRRNAHTAAMSD. The interval 35–66 is disordered; that stretch reads SDDSLDQGSSSSYGDSASQPHLGKGKGRQDSL. Residues 40-53 show a composition bias toward low complexity; it reads DQGSSSSYGDSASQ. The 65-residue stretch at 83–147 folds into the J domain; it reads DPFEVMALDR…SSRSAFLKTG (65 aa). The interval 203 to 226 is disordered; the sequence is DGSQGWRPYEDPSKGFSPPTSGPA. The IQ domain maps to 275-303; sequence RALAQARYEAATHGHIRREQIRRRVREAE.

Belongs to the DnaJ family. Interacts with QCR2.

Its subcellular location is the mitochondrion. In terms of biological role, mitochondrial co-chaperone required for ubiquinol-cytochrome c oxidoreductase (mitochondrial respiratory chain complex III) activity. The protein is Mitochondrial respiration co-chaperone MRJ1 of Cryptococcus neoformans var. grubii serotype A (strain H99 / ATCC 208821 / CBS 10515 / FGSC 9487) (Filobasidiella neoformans var. grubii).